The sequence spans 140 residues: Large ribosomal subunit protein uL11 (140 aa).

The protein belongs to the universal ribosomal protein uL11 family. As to quaternary structure, part of the ribosomal stalk of the 50S ribosomal subunit. Interacts with L10 and the large rRNA to form the base of the stalk. L10 forms an elongated spine to which L12 dimers bind in a sequential fashion forming a multimeric L10(L12)X complex. In terms of processing, one or more lysine residues are methylated.

Its function is as follows. Forms part of the ribosomal stalk which helps the ribosome interact with GTP-bound translation factors. The polypeptide is Large ribosomal subunit protein uL11 (Desulfatibacillum aliphaticivorans).